We begin with the raw amino-acid sequence, 118 residues long: V-type proton ATPase subunit G 1 (118 aa).

Alanine 2 carries the post-translational modification N-acetylalanine.

The protein belongs to the V-ATPase G subunit family. As to quaternary structure, V-ATPase is a heteromultimeric enzyme made up of two complexes: the ATP-hydrolytic V1 complex and the proton translocation V0 complex. The V1 complex consists of three catalytic AB heterodimers that form a heterohexamer, three peripheral stalks each consisting of EG heterodimers, one central rotor including subunits D and F, and the regulatory subunits C and H. The proton translocation complex V0 consists of the proton transport subunit a, a ring of proteolipid subunits c9c'', rotary subunit d, subunits e and f, and the accessory subunits ATP6AP1/Ac45 and ATP6AP2/PRR. Kidney; localizes to early distal nephron, encompassing thick ascending limbs and distal convoluted tubules (at protein level). Ubiquitous.

Its subcellular location is the apical cell membrane. Subunit of the V1 complex of vacuolar(H+)-ATPase (V-ATPase), a multisubunit enzyme composed of a peripheral complex (V1) that hydrolyzes ATP and a membrane integral complex (V0) that translocates protons. V-ATPase is responsible for acidifying and maintaining the pH of intracellular compartments and in some cell types, is targeted to the plasma membrane, where it is responsible for acidifying the extracellular environment. In aerobic conditions, involved in intracellular iron homeostasis, thus triggering the activity of Fe(2+) prolyl hydroxylase (PHD) enzymes, and leading to HIF1A hydroxylation and subsequent proteasomal degradation. This Mus musculus (Mouse) protein is V-type proton ATPase subunit G 1 (Atp6v1g1).